The sequence spans 89 residues: Large ribosomal subunit protein bL27 (89 aa).

Belongs to the bacterial ribosomal protein bL27 family.

The chain is Large ribosomal subunit protein bL27 from Bacteroides thetaiotaomicron (strain ATCC 29148 / DSM 2079 / JCM 5827 / CCUG 10774 / NCTC 10582 / VPI-5482 / E50).